The sequence spans 234 residues: MKIIRVQDQLEGGKVAFSLLKESLAEGATTLGLATGSTPITFYQELVNSDLDCSALTSINLDEYVGLPVENDQSYDYFMRDQLFNAKPFKESFLPNGLADDLEAEVKRYDQVIAEHPIDFQILGIGRNGHIGFNEPGTSFAEKTHVVDLQASTIEANSRFFASIDDVPKQAISMGIASIMASKMIVLLAFGKEKAAAIKGMVSGPVTEALPASVLQQHDNVVVIIDEAAASELD.

Residue Asp62 is the Proton acceptor; for enolization step of the active site. The For ring-opening step role is filled by Asn128. His130 acts as the Proton acceptor; for ring-opening step in catalysis. Catalysis depends on Glu135, which acts as the For ring-opening step.

This sequence belongs to the glucosamine/galactosamine-6-phosphate isomerase family. NagB subfamily.

The catalysed reaction is alpha-D-glucosamine 6-phosphate + H2O = beta-D-fructose 6-phosphate + NH4(+). Its pathway is amino-sugar metabolism; N-acetylneuraminate degradation; D-fructose 6-phosphate from N-acetylneuraminate: step 5/5. Its function is as follows. Catalyzes the reversible isomerization-deamination of glucosamine 6-phosphate (GlcN6P) to form fructose 6-phosphate (Fru6P) and ammonium ion. The chain is Glucosamine-6-phosphate deaminase from Streptococcus equi subsp. zooepidemicus (strain MGCS10565).